The following is a 158-amino-acid chain: 2-C-methyl-D-erythritol 2,4-cyclodiphosphate synthase (158 aa).

Aspartate 9 and histidine 11 together coordinate a divalent metal cation. Residues 9–11 (DVH) and 35–36 (HS) contribute to the 4-CDP-2-C-methyl-D-erythritol 2-phosphate site. Histidine 43 serves as a coordination point for a divalent metal cation. Residues 57–59 (DIG), 62–66 (FPDTD), 101–107 (AQAPKMA), 133–136 (TTTE), phenylalanine 140, and arginine 143 contribute to the 4-CDP-2-C-methyl-D-erythritol 2-phosphate site.

Belongs to the IspF family. As to quaternary structure, homotrimer. It depends on a divalent metal cation as a cofactor.

The enzyme catalyses 4-CDP-2-C-methyl-D-erythritol 2-phosphate = 2-C-methyl-D-erythritol 2,4-cyclic diphosphate + CMP. It participates in isoprenoid biosynthesis; isopentenyl diphosphate biosynthesis via DXP pathway; isopentenyl diphosphate from 1-deoxy-D-xylulose 5-phosphate: step 4/6. Its function is as follows. Involved in the biosynthesis of isopentenyl diphosphate (IPP) and dimethylallyl diphosphate (DMAPP), two major building blocks of isoprenoid compounds. Catalyzes the conversion of 4-diphosphocytidyl-2-C-methyl-D-erythritol 2-phosphate (CDP-ME2P) to 2-C-methyl-D-erythritol 2,4-cyclodiphosphate (ME-CPP) with a corresponding release of cytidine 5-monophosphate (CMP). The polypeptide is 2-C-methyl-D-erythritol 2,4-cyclodiphosphate synthase (Vibrio campbellii (strain ATCC BAA-1116)).